A 1005-amino-acid polypeptide reads, in one-letter code: Translocated actin-recruiting phosphoprotein (1005 aa).

A compositionally biased stretch (polar residues) spans 1–10 (MTNSISGYQP). Disordered regions lie at residues 1–36 (MTNS…SVST), 73–155 (APNV…SNYD), 487–521 (INWG…SPTP), 542–626 (DTNV…DGPA), 671–749 (GSAQ…GPSG), and 792–847 (TGTS…TSLM). Low complexity-rich tracts occupy residues 11–36 (TVTT…SVST) and 73–121 (APNV…SSDH). Positions 130–154 (GSNSGDISNNYDDVGSNNGDISSNY) are enriched in polar residues. Low complexity-rich tracts occupy residues 542-578 (DTNV…TDDI), 593-612 (GDIS…VSSS), 720-736 (SSSG…SSES), and 831-846 (STTT…TTSL).

Belongs to the chlamydial CPn_0572/CT_456/TC_0741 family. In terms of processing, phosphorylated on a tyrosine on attachment to the host cell. Tyrosine phosphorylation is temporally and spatially associated with recruitment of actin to the site of chlamydial entry. Phosphorylated Tarp seems to remain cytoplasmically exposed on the inclusion membrane at one side of internalized elementary bodies for several hours after entry.

Its subcellular location is the secreted. Appears to initiate or participate in signaling events that regulate the actin recruitment, which ultimately leads to internalization. This is Translocated actin-recruiting phosphoprotein (tarP) from Chlamydia trachomatis serovar D (strain ATCC VR-885 / DSM 19411 / UW-3/Cx).